A 508-amino-acid polypeptide reads, in one-letter code: Small ribosomal subunit protein mS47 (508 aa).

The protein belongs to the enoyl-CoA hydratase/isomerase family. Mitochondrion-specific ribosomal protein mS47 subfamily. Component of the mitochondrial small ribosomal subunit (mt-SSU). Mature N.crassa 74S mitochondrial ribosomes consist of a small (37S) and a large (54S) subunit. The 37S small subunit contains a 16S ribosomal RNA (16S mt-rRNA) and 32 different proteins. The 54S large subunit contains a 23S rRNA (23S mt-rRNA) and 42 different proteins. mS47 forms a protuberance of the N.crassa mitoribosome and retains a solvent-exposed cavity liekly capable of accommodating a substrate, in accordance with it being an active enzyme as well as an integral constituent of the mitoribosome.

It localises to the mitochondrion. The enzyme catalyses 3-hydroxy-2-methylpropanoyl-CoA + H2O = 3-hydroxy-2-methylpropanoate + CoA + H(+). Its function is as follows. Component of the mitochondrial ribosome (mitoribosome), a dedicated translation machinery responsible for the synthesis of mitochondrial genome-encoded proteins, including at least some of the essential transmembrane subunits of the mitochondrial respiratory chain. The mitoribosomes are attached to the mitochondrial inner membrane and translation products are cotranslationally integrated into the membrane. mS47 has enzymatic activity in vitro, and is able to catalyze the specific hydrolysis of 3-hydroxyisobutyryl-CoA (HIBYL-CoA). However, because the turnover rate of mS47 is only a fraction of that of the homologous mammalian enzyme, the physiological function of this activity remains unclear. The chain is Small ribosomal subunit protein mS47 (ehd3) from Neurospora crassa (strain ATCC 24698 / 74-OR23-1A / CBS 708.71 / DSM 1257 / FGSC 987).